A 273-amino-acid chain; its full sequence is Phosphonates import ATP-binding protein PhnC (273 aa).

An ABC transporter domain is found at Leu-2–Ala-245. Gly-34–Ser-41 serves as a coordination point for ATP.

This sequence belongs to the ABC transporter superfamily. Phosphonates importer (TC 3.A.1.9.1) family. The complex is composed of two ATP-binding proteins (PhnC), two transmembrane proteins (PhnE) and a solute-binding protein (PhnD).

The protein resides in the cell inner membrane. It carries out the reaction phosphonate(out) + ATP + H2O = phosphonate(in) + ADP + phosphate + H(+). Its function is as follows. Part of the ABC transporter complex PhnCDE involved in phosphonates import. Responsible for energy coupling to the transport system. The polypeptide is Phosphonates import ATP-binding protein PhnC (Ruegeria pomeroyi (strain ATCC 700808 / DSM 15171 / DSS-3) (Silicibacter pomeroyi)).